Consider the following 276-residue polypeptide: Dermonecrotic toxin LlSicTox-alphaIV2i (276 aa).

H5 is a catalytic residue. Mg(2+)-binding residues include E25 and D27. Residue H41 is the Nucleophile of the active site. Disulfide bonds link C45–C51 and C47–C193. Residue D85 participates in Mg(2+) binding.

The protein belongs to the arthropod phospholipase D family. Class II subfamily. Mg(2+) is required as a cofactor. In terms of tissue distribution, expressed by the venom gland.

Its subcellular location is the secreted. The catalysed reaction is an N-(acyl)-sphingosylphosphocholine = an N-(acyl)-sphingosyl-1,3-cyclic phosphate + choline. It catalyses the reaction an N-(acyl)-sphingosylphosphoethanolamine = an N-(acyl)-sphingosyl-1,3-cyclic phosphate + ethanolamine. It carries out the reaction a 1-acyl-sn-glycero-3-phosphocholine = a 1-acyl-sn-glycero-2,3-cyclic phosphate + choline. The enzyme catalyses a 1-acyl-sn-glycero-3-phosphoethanolamine = a 1-acyl-sn-glycero-2,3-cyclic phosphate + ethanolamine. Dermonecrotic toxins cleave the phosphodiester linkage between the phosphate and headgroup of certain phospholipids (sphingolipid and lysolipid substrates), forming an alcohol (often choline) and a cyclic phosphate. This toxin acts on sphingomyelin (SM). It may also act on ceramide phosphoethanolamine (CPE), lysophosphatidylcholine (LPC) and lysophosphatidylethanolamine (LPE), but not on lysophosphatidylserine (LPS), and lysophosphatidylglycerol (LPG). It acts by transphosphatidylation, releasing exclusively cyclic phosphate products as second products. Induces dermonecrosis, hemolysis, increased vascular permeability, edema, inflammatory response, and platelet aggregation. This is Dermonecrotic toxin LlSicTox-alphaIV2i from Loxosceles laeta (South American recluse spider).